Here is a 257-residue protein sequence, read N- to C-terminus: MSVPLILTILAGAATFIGAFLGVLGQKPSNRLLAFSLGFAAGIMLLISLMEMLPAALAAEGMSPVLGYGMFIFGLLGYFGLDRMLPHAHPQDLMQKSVQPLPKSLKRTAILLTLGISLHNFPEGIATFVTASSNLELGFGIALAVALHNIPEGLAVAGPVYAATGSKRTAILWAGISGLAEILGGVLAWLILGSMISPVVMAAIMAAVAGIMVALSVDELMPLAKEIDPNNNPSYGVLCGMSVMGFSLVLLQTAGIG.

3 helical membrane passes run 5-25 (LILT…GVLG), 32-52 (LLAF…LMEM), and 61-81 (GMSP…YFGL). The Fe(2+) site is built by Asn120 and Glu123. Positions 123 and 148 each coordinate Zn(2+). A run of 4 helical transmembrane segments spans residues 137–157 (LGFG…LAVA), 171–191 (ILWA…AWLI), 195–215 (MISP…MVAL), and 236–256 (GVLC…TAGI). 3 residues coordinate Fe(2+): Asn149, Glu152, and Glu181. Glu152 provides a ligand contact to Zn(2+).

The protein belongs to the ZIP transporter (TC 2.A.5) family. ZupT subfamily.

Its subcellular location is the cell inner membrane. It catalyses the reaction Zn(2+)(in) = Zn(2+)(out). Functionally, mediates zinc uptake. May also transport other divalent cations. The protein is Zinc transporter ZupT of Escherichia coli O127:H6 (strain E2348/69 / EPEC).